Reading from the N-terminus, the 704-residue chain is Polyribonucleotide nucleotidyltransferase (704 aa).

The Mg(2+) site is built by Asp491 and Asp497. The KH domain maps to 558–617; it reads PNYAVIEINSDKIRDVIGKGGATIRQLTEDTGAVIDIDDNGTIRIFGENKAATKEAIRQI. Positions 627-695 constitute an S1 motif domain; that stretch reads GKVYKGTVAR…NRGRIKLTMK (69 aa).

Belongs to the polyribonucleotide nucleotidyltransferase family. In terms of assembly, component of the RNA degradosome, which is a multiprotein complex involved in RNA processing and mRNA degradation. Requires Mg(2+) as cofactor.

Its subcellular location is the cytoplasm. It catalyses the reaction RNA(n+1) + phosphate = RNA(n) + a ribonucleoside 5'-diphosphate. Its function is as follows. Involved in mRNA degradation. Catalyzes the phosphorolysis of single-stranded polyribonucleotides processively in the 3'- to 5'-direction. The sequence is that of Polyribonucleotide nucleotidyltransferase from Psychrobacter sp. (strain PRwf-1).